The following is a 376-amino-acid chain: N-acetyldiaminopimelate deacetylase (376 aa).

Asp-69 is an active-site residue. Residue Glu-127 is the Proton acceptor of the active site.

Belongs to the peptidase M20A family. N-acetyldiaminopimelate deacetylase subfamily.

The catalysed reaction is N-acetyl-(2S,6S)-2,6-diaminopimelate + H2O = (2S,6S)-2,6-diaminopimelate + acetate. Its pathway is amino-acid biosynthesis; L-lysine biosynthesis via DAP pathway; LL-2,6-diaminopimelate from (S)-tetrahydrodipicolinate (acetylase route): step 3/3. In terms of biological role, catalyzes the conversion of N-acetyl-diaminopimelate to diaminopimelate and acetate. The sequence is that of N-acetyldiaminopimelate deacetylase from Lactococcus lactis subsp. cremoris (strain SK11).